The sequence spans 123 residues: Small ribosomal subunit protein uS12c (123 aa).

It belongs to the universal ribosomal protein uS12 family. Part of the 30S ribosomal subunit.

The protein localises to the plastid. It is found in the chloroplast. Functionally, with S4 and S5 plays an important role in translational accuracy. Located at the interface of the 30S and 50S subunits. This Chlorella vulgaris (Green alga) protein is Small ribosomal subunit protein uS12c (rps12).